Here is a 324-residue protein sequence, read N- to C-terminus: Kelch domain-containing protein AF_2170 (324 aa).

2 Kelch repeats span residues 229–276 (YIFA…VGGE) and 277–323 (YIYI…NNGK).

The polypeptide is Kelch domain-containing protein AF_2170 (Archaeoglobus fulgidus (strain ATCC 49558 / DSM 4304 / JCM 9628 / NBRC 100126 / VC-16)).